We begin with the raw amino-acid sequence, 953 residues long: Isoleucine--tRNA ligase (953 aa).

Positions 57 to 67 (PYANGDIHIGH) match the 'HIGH' region motif. Glutamate 582 is a binding site for L-isoleucyl-5'-AMP. Positions 623–627 (KMSKS) match the 'KMSKS' region motif. Lysine 626 is a binding site for ATP. The Zn(2+) site is built by cysteine 916, cysteine 919, cysteine 936, and cysteine 939.

The protein belongs to the class-I aminoacyl-tRNA synthetase family. IleS type 1 subfamily. As to quaternary structure, monomer. Requires Zn(2+) as cofactor.

The protein localises to the cytoplasm. It carries out the reaction tRNA(Ile) + L-isoleucine + ATP = L-isoleucyl-tRNA(Ile) + AMP + diphosphate. In terms of biological role, catalyzes the attachment of isoleucine to tRNA(Ile). As IleRS can inadvertently accommodate and process structurally similar amino acids such as valine, to avoid such errors it has two additional distinct tRNA(Ile)-dependent editing activities. One activity is designated as 'pretransfer' editing and involves the hydrolysis of activated Val-AMP. The other activity is designated 'posttransfer' editing and involves deacylation of mischarged Val-tRNA(Ile). The protein is Isoleucine--tRNA ligase of Bordetella parapertussis (strain 12822 / ATCC BAA-587 / NCTC 13253).